The sequence spans 691 residues: Kinetochore protein NDC80 (691 aa).

The tract at residues 1–95 is disordered; it reads MQSSTSTDQH…LNDKSNSRNS (95 aa). The segment covering 10 to 19 has biased composition (basic and acidic residues); the sequence is HVLHHMDPHR. Polar residues predominate over residues 20–42; it reads FTSQIPTATSSQLRRRNSTNQGL. At Thr38 the chain carries Phosphothreonine. The segment covering 54-65 has biased composition (low complexity); sequence TISGTGIPTGGI. Residue Thr248 is modified to Phosphothreonine. 2 coiled-coil regions span residues 376-446 and 522-686; these read GKLE…SIKS and KKSI…FETE.

It belongs to the NDC80/HEC1 family. Component of the NDC80 complex, which consists of NDC80, NUF2, SPC24 and SPC25. The NDC80 complex is formed by two subcomplexes, NDC80-NUF2 and SPC24-SPC25, which are joined end-to-end through their coiled-coil domains. It has a rod-like structure with a length of 570 Angstroms and globular domains at either end. The NDC80-NUF2 globular domains are probably directed to microtubules, the SPC24-SPC25 globular domains to the centromere. NDC80 probably interacts with SMC1 and SMC2. Also interacts with KIN3. Interacts with DMC1.

Its subcellular location is the nucleus. The protein resides in the chromosome. It is found in the centromere. It localises to the kinetochore. Acts as a component of the essential kinetochore-associated NDC80 complex, which is involved in chromosome segregation and spindle checkpoint activity. This is Kinetochore protein NDC80 from Saccharomyces cerevisiae (strain ATCC 204508 / S288c) (Baker's yeast).